The sequence spans 734 residues: MVPLAYYGQHFVPLDYFYQLSSANTLTHQHTGEKLNQFNNQPMAKVQSHSNHFAVPPLGSNKKVQRCSVLPSPKSQDKISQSFCDRFLNSPLFHAKHQNTPSIGLHWRSSLWPAQRALNSHLLHSKAQTTSSSDLNMTSSLELNQAALSLQLPFCKPQTTSSSLDVCWRSLSLKSHQRVSSSSLFRLQNQEIPSINIIWTSSSLGPKRKALSSTLLQSKPQKTSSLDYLWTSSLQRNQRSLSSPSLNTKLQTSDLFWTSPSFKPNQIALTSPLLDSRLQKTPILNSNPTIGGLPVSHSKARQSASSYFVHPSENLPLFQLNSQSMFMLDCNFQTTNSPVCHSKFQNTTSPNGKHRVTHLPSPHPKTNISGQLLSSSKHCTRNTAASTLGFRLQSKSSFQFSPKTESNKEIPWTLKYSQPCIVKGGTVPDDVVNKIVNSISNTRIQRDLCRQILFRRMRGRPNPHPGPRLSSNYVVCLACASCLKSPCNHLRGKKNPHCATLSVIPTPEANSEGKIEVKLVLILSLPETFSSCLPFPMKENQPNEVPEDNLEGVEKIQQFFPTSERDIQGLNMKQIWWAVAPENKVIGQQPQAIDWLFYVKKNNSQPQSLLPSTSSSTSSSSTTSSSSSVASASSDSSSSSSSSSSFSISSSSSPSKEFMTLTLSRPVFRKVLSYHRLPAGVSWLEFIYSKDYQLHPRKPNRSQSSSLKTKPVRNNNTVKWRKGANTLFKFFRTK.

The segment at 608–654 (SLLPSTSSSTSSSSTTSSSSSVASASSDSSSSSSSSSSFSISSSSSP) is disordered. Residues 612–654 (STSSSTSSSSTTSSSSSVASASSDSSSSSSSSSSFSISSSSSP) are compositionally biased toward low complexity.

Interacts (via C-terminus) with CSNK2A2. In terms of processing, phosphorylated by CK2 (casein kinase II), specifically by complexes containing catalytic subunit CSNK2A2.

It localises to the nucleus. In terms of biological role, may play a role in chromatin regulation of male germ cells. This Homo sapiens (Human) protein is Casein kinase II subunit alpha'-interacting protein.